A 370-amino-acid chain; its full sequence is Nodulation protein Z (370 aa).

Residues 47–361 enclose the GT23 domain; it reads SSNDRFVVSR…NDPGRLILIE (315 aa).

It belongs to the glycosyltransferase 23 family.

Its function is as follows. Fucosyltransferase which adds the fucose moiety of the nod factor on its terminal reducing N-acetylglucosamine end. Uses GDP-fucose as the donor group. In Bradyrhizobium diazoefficiens (strain JCM 10833 / BCRC 13528 / IAM 13628 / NBRC 14792 / USDA 110), this protein is Nodulation protein Z (nodZ).